Reading from the N-terminus, the 296-residue chain is 4-hydroxybenzoate octaprenyltransferase (296 aa).

Transmembrane regions (helical) follow at residues 28 to 48 (IGTLLLLWPTYWALWLASDGI), 51 to 71 (LAVLAAFTIGTFLMRSAGCVI), 102 to 122 (LLLTAFLCLLAALCLIPLNHL), 143 to 163 (FFPIPQFYLGLAFSFGIPMAF), 174 to 194 (AWILFAANVLWTLAYDTVYAM), 212 to 232 (FGRYDIAAVMLCHGGFTLLMA), 233 to 253 (VLGAVIGAAWAYWTAIPIVLL), and 274 to 294 (FLANNRIGWVWFAAIFAHTFF).

It belongs to the UbiA prenyltransferase family. It depends on Mg(2+) as a cofactor.

It localises to the cell inner membrane. The enzyme catalyses all-trans-octaprenyl diphosphate + 4-hydroxybenzoate = 4-hydroxy-3-(all-trans-octaprenyl)benzoate + diphosphate. It participates in cofactor biosynthesis; ubiquinone biosynthesis. In terms of biological role, catalyzes the prenylation of para-hydroxybenzoate (PHB) with an all-trans polyprenyl group. Mediates the second step in the final reaction sequence of ubiquinone-8 (UQ-8) biosynthesis, which is the condensation of the polyisoprenoid side chain with PHB, generating the first membrane-bound Q intermediate 3-octaprenyl-4-hydroxybenzoate. This is 4-hydroxybenzoate octaprenyltransferase from Neisseria gonorrhoeae (strain NCCP11945).